We begin with the raw amino-acid sequence, 157 residues long: Small ribosomal subunit protein uS7 (157 aa).

This sequence belongs to the universal ribosomal protein uS7 family. Part of the 30S ribosomal subunit. Contacts proteins S9 and S11.

Its function is as follows. One of the primary rRNA binding proteins, it binds directly to 16S rRNA where it nucleates assembly of the head domain of the 30S subunit. Is located at the subunit interface close to the decoding center, probably blocks exit of the E-site tRNA. The sequence is that of Small ribosomal subunit protein uS7 from Polaromonas naphthalenivorans (strain CJ2).